The sequence spans 535 residues: CTP synthase (535 aa).

The amidoligase domain stretch occupies residues 1 to 268; the sequence is MSTKYIFVTG…DQIVCDHLKL (268 aa). Ser14 is a CTP binding site. A UTP-binding site is contributed by Ser14. 15–20 lines the ATP pocket; it reads SMGKGI. Tyr55 lines the L-glutamine pocket. Asp72 provides a ligand contact to ATP. 2 residues coordinate Mg(2+): Asp72 and Glu142. CTP contacts are provided by residues 149 to 151, 189 to 194, and Lys225; these read DME and KTKIAQ. Residues 189–194 and Lys225 each bind UTP; that span reads KTKIAQ. The 243-residue stretch at 293 to 535 folds into the Glutamine amidotransferase type-1 domain; the sequence is KIALVGKYVE…FIRVAVENSK (243 aa). Gly355 is a binding site for L-glutamine. Residue Cys382 is the Nucleophile; for glutamine hydrolysis of the active site. Residues 383-386, Glu406, and Arg464 contribute to the L-glutamine site; that span reads LGMQ. Catalysis depends on residues His509 and Glu511.

The protein belongs to the CTP synthase family. As to quaternary structure, homotetramer.

The enzyme catalyses UTP + L-glutamine + ATP + H2O = CTP + L-glutamate + ADP + phosphate + 2 H(+). It catalyses the reaction L-glutamine + H2O = L-glutamate + NH4(+). It carries out the reaction UTP + NH4(+) + ATP = CTP + ADP + phosphate + 2 H(+). Its pathway is pyrimidine metabolism; CTP biosynthesis via de novo pathway; CTP from UDP: step 2/2. Allosterically activated by GTP, when glutamine is the substrate; GTP has no effect on the reaction when ammonia is the substrate. The allosteric effector GTP functions by stabilizing the protein conformation that binds the tetrahedral intermediate(s) formed during glutamine hydrolysis. Inhibited by the product CTP, via allosteric rather than competitive inhibition. In terms of biological role, catalyzes the ATP-dependent amination of UTP to CTP with either L-glutamine or ammonia as the source of nitrogen. Regulates intracellular CTP levels through interactions with the four ribonucleotide triphosphates. In Lactococcus lactis subsp. lactis (strain IL1403) (Streptococcus lactis), this protein is CTP synthase.